The chain runs to 177 residues: Large ribosomal subunit protein uL6 (177 aa).

Belongs to the universal ribosomal protein uL6 family. As to quaternary structure, part of the 50S ribosomal subunit.

Its function is as follows. This protein binds to the 23S rRNA, and is important in its secondary structure. It is located near the subunit interface in the base of the L7/L12 stalk, and near the tRNA binding site of the peptidyltransferase center. The polypeptide is Large ribosomal subunit protein uL6 (Cupriavidus pinatubonensis (strain JMP 134 / LMG 1197) (Cupriavidus necator (strain JMP 134))).